The chain runs to 344 residues: S-methyl-5'-thioadenosine phosphorylase (344 aa).

Phosphate is bound by residues T45, 88 to 89 (RH), and 121 to 122 (SA). Residue M238 participates in substrate binding. S239 is a binding site for phosphate. Residue 262-264 (DYD) coordinates substrate.

It belongs to the PNP/MTAP phosphorylase family. MTAP subfamily. In terms of assembly, homotrimer.

Its subcellular location is the cytoplasm. The protein resides in the nucleus. The catalysed reaction is S-methyl-5'-thioadenosine + phosphate = 5-(methylsulfanyl)-alpha-D-ribose 1-phosphate + adenine. Its pathway is amino-acid biosynthesis; L-methionine biosynthesis via salvage pathway; S-methyl-5-thio-alpha-D-ribose 1-phosphate from S-methyl-5'-thioadenosine (phosphorylase route): step 1/1. Its function is as follows. Catalyzes the reversible phosphorylation of S-methyl-5'-thioadenosine (MTA) to adenine and 5-methylthioribose-1-phosphate. Involved in the breakdown of MTA, a major by-product of polyamine biosynthesis. Responsible for the first step in the methionine salvage pathway after MTA has been generated from S-adenosylmethionine. Has broad substrate specificity with 6-aminopurine nucleosides as preferred substrates. The chain is S-methyl-5'-thioadenosine phosphorylase from Candida albicans (strain SC5314 / ATCC MYA-2876) (Yeast).